The primary structure comprises 292 residues: Cyclin-dependent kinase 5 homolog (292 aa).

Positions tyrosine 4–phenylalanine 285 constitute a Protein kinase domain. Residues leucine 10–valine 18 and lysine 33 contribute to the ATP site. Residue threonine 14 is modified to Phosphothreonine. Tyrosine 15 carries the phosphotyrosine modification. Aspartate 126 acts as the Proton acceptor in catalysis.

Belongs to the protein kinase superfamily. CMGC Ser/Thr protein kinase family. CDC2/CDKX subfamily.

It catalyses the reaction L-seryl-[protein] + ATP = O-phospho-L-seryl-[protein] + ADP + H(+). It carries out the reaction L-threonyl-[protein] + ATP = O-phospho-L-threonyl-[protein] + ADP + H(+). Its activity is regulated as follows. Phosphorylation at Thr-14 or Tyr-15 inactivates the enzyme. In Dictyostelium discoideum (Social amoeba), this protein is Cyclin-dependent kinase 5 homolog (cdk5).